A 263-amino-acid chain; its full sequence is MKIILFDNKINSRLNKITLTNYAAKLDQTSEIWLFNCIENIQHIFFKSQLKSSHITKIFISGTSFEYTAGLPGLLSSLTLSGRLHPISIYSPQSLKKYLEACTKYSQTNFSFPINFHNLQYGGQVVNQFYTVICLPLSKKSLLYGFIILKKEKQGVFNLAQAKTLNILQGPIYGKLKEKDNFLSPDGYYLSGQDFSSNTIMGHKISLPLLVRYSRIISEMHWFCSYPIRLNTYSHQQGVKCLPHNVLTDIMKSQIYQDNSFVE.

The protein belongs to the AtsA family.

It is found in the plastid. It localises to the chloroplast. This is an uncharacterized protein from Pyropia yezoensis (Susabi-nori).